The primary structure comprises 350 residues: Lipase chaperone (350 aa).

The helical transmembrane segment at isoleucine 12 to valine 32 threads the bilayer.

It belongs to the lipase chaperone family.

The protein localises to the cell inner membrane. Functionally, may be involved in the folding of the extracellular lipase during its passage through the periplasm. The polypeptide is Lipase chaperone (lifO) (Xylella fastidiosa (strain 9a5c)).